Here is a 301-residue protein sequence, read N- to C-terminus: CPX chromosomal region candidate gene 1 protein (301 aa).

Residues 1–77 are disordered; it reads MSYPTKEGSD…ENSELETEIQ (77 aa). A compositionally biased stretch (polar residues) spans 44–60; it reads VETNPINREPGTATSQE.

Expressed in a variety of fetal tissues.

This Homo sapiens (Human) protein is CPX chromosomal region candidate gene 1 protein (CPXCR1).